A 148-amino-acid chain; its full sequence is UPF0756 membrane protein NMCC_1816 (148 aa).

Helical transmembrane passes span 13 to 35, 50 to 70, 80 to 100, and 121 to 141; these read LILL…LLLM, HGLN…LVSG, FLNF…WLAG, and VIGV…AGIL.

The protein belongs to the UPF0756 family.

The protein localises to the cell membrane. This is UPF0756 membrane protein NMCC_1816 from Neisseria meningitidis serogroup C (strain 053442).